Consider the following 160-residue polypeptide: Ribosome maturation factor RimP (160 aa).

The protein belongs to the RimP family.

Its subcellular location is the cytoplasm. Its function is as follows. Required for maturation of 30S ribosomal subunits. The protein is Ribosome maturation factor RimP of Geobacter sp. (strain M21).